A 332-amino-acid polypeptide reads, in one-letter code: Putative ketol-acid reductoisomerase 3 (332 aa).

A KARI N-terminal Rossmann domain is found at 1–182; that stretch reads MDKTVLDASL…AIPGGIAVIS (182 aa). The KARI C-terminal knotted domain occupies 183 to 329; it reads SFEEEALLDL…KELYKILRRK (147 aa).

This sequence belongs to the ketol-acid reductoisomerase family.

It carries out the reaction (2R)-2,3-dihydroxy-3-methylbutanoate + NADP(+) = (2S)-2-acetolactate + NADPH + H(+). The enzyme catalyses (2R,3R)-2,3-dihydroxy-3-methylpentanoate + NADP(+) = (S)-2-ethyl-2-hydroxy-3-oxobutanoate + NADPH + H(+). It functions in the pathway amino-acid biosynthesis; L-isoleucine biosynthesis; L-isoleucine from 2-oxobutanoate: step 2/4. It participates in amino-acid biosynthesis; L-valine biosynthesis; L-valine from pyruvate: step 2/4. This chain is Putative ketol-acid reductoisomerase 3 (ilvC3), found in Saccharolobus solfataricus (strain ATCC 35092 / DSM 1617 / JCM 11322 / P2) (Sulfolobus solfataricus).